We begin with the raw amino-acid sequence, 795 residues long: Mitochondrial intermediate peptidase (795 aa).

Residues 1-22 (MLKTLNRRSWTCRQCIRILRRN) constitute a mitochondrion transit peptide. Residue histidine 561 coordinates Zn(2+). Residue glutamate 562 is part of the active site. 2 residues coordinate Zn(2+): histidine 565 and histidine 568.

The protein belongs to the peptidase M3 family. Requires Zn(2+) as cofactor.

The protein resides in the mitochondrion matrix. The enzyme catalyses Release of an N-terminal octapeptide as second stage of processing of some proteins imported into the mitochondrion.. Functionally, cleaves proteins, imported into the mitochondrion, to their mature size. While most mitochondrial precursor proteins are processed to the mature form in one step by mitochondrial processing peptidase (MPP), the sequential cleavage by MIP of an octapeptide after initial processing by MPP is a required step for a subgroup of nuclear-encoded precursor proteins destined for the matrix or the inner membrane. The sequence is that of Mitochondrial intermediate peptidase (OCT1) from Coccidioides immitis (strain RS) (Valley fever fungus).